The sequence spans 414 residues: Serine--tRNA ligase (414 aa).

Residue 230-232 participates in L-serine binding; the sequence is TAE. 261-263 is a binding site for ATP; it reads RKE. L-serine is bound at residue Glu-284. An ATP-binding site is contributed by 348 to 351; that stretch reads EISS. Position 382 (Ser-382) interacts with L-serine.

It belongs to the class-II aminoacyl-tRNA synthetase family. Type-1 seryl-tRNA synthetase subfamily. As to quaternary structure, homodimer. The tRNA molecule binds across the dimer.

It is found in the cytoplasm. The catalysed reaction is tRNA(Ser) + L-serine + ATP = L-seryl-tRNA(Ser) + AMP + diphosphate + H(+). It catalyses the reaction tRNA(Sec) + L-serine + ATP = L-seryl-tRNA(Sec) + AMP + diphosphate + H(+). The protein operates within aminoacyl-tRNA biosynthesis; selenocysteinyl-tRNA(Sec) biosynthesis; L-seryl-tRNA(Sec) from L-serine and tRNA(Sec): step 1/1. In terms of biological role, catalyzes the attachment of serine to tRNA(Ser). Is also able to aminoacylate tRNA(Sec) with serine, to form the misacylated tRNA L-seryl-tRNA(Sec), which will be further converted into selenocysteinyl-tRNA(Sec). This is Serine--tRNA ligase from Nitratiruptor sp. (strain SB155-2).